We begin with the raw amino-acid sequence, 785 residues long: Hypha-specific G1 cyclin-related protein 1 (785 aa).

The segment at 1 to 42 (MINITKPLTPKSISQQKQQQQHPYKNISTTKSNNNPQASGSK) is disordered. Positions 22 to 42 (HPYKNISTTKSNNNPQASGSK) are enriched in polar residues. The region spanning 71–238 (DIYDIMVNLI…VLNTLEWSLN (168 aa)) is the Cyclin N-terminal domain. 3 disordered regions span residues 408 to 433 (TTTTTTTTSDNISTTPTSSTGSTTPV), 447 to 679 (VSST…SKFN), and 750 to 774 (NNSGNGKGNGNGGSGTPISENDSPI). 2 stretches are compositionally biased toward low complexity: residues 447-473 (VSSTSSVASSSNANTPSSSCSTTSTTP) and 484-512 (NYSNYSNYSNYSNSSTSLGLTNNNNNNTT). The span at 513 to 535 (ISPVDSTTINSHTKNSSQLNYQY) shows a compositional bias: polar residues. Positions 579 to 613 (NSANKNSNKSNSANNNNTTTIATTTTTTTNNNNNS) are enriched in low complexity. A compositionally biased stretch (polar residues) spans 621–631 (LSYNNYFNSPN). Residues 646–679 (QQQQQNQGQNQQQPLQLYQGDNNNNGTNTNSKFN) show a composition bias toward low complexity. The segment covering 754-764 (NGKGNGNGGSG) has biased composition (gly residues). The span at 765 to 774 (TPISENDSPI) shows a compositional bias: polar residues.

Belongs to the cyclin family. As to quaternary structure, interacts with CDC28.

Functionally, hypha-specific G1 cyclin-related protein involved in regulation of morphogenesis and opaque cells filamentous growth, and required for both conventional and pheromone-stimulated biofilm formation. Required to maintain hyphal tip localization of actin and SPA2. Regulates the CDC28 kinase during hyphal growth. The CDC28-HGC1 complex phosphorylates and prevents RGA2 from localizing to hyphal tips, leading to localized CDC42 activation for hyphal extension. The CDC28-HGC1 complex also phosphorylates SEC2 and maintains CDC11 phosphorylation throughout hyphal growth. Moreover CDC28-HGC1 phosphorylation of EFG1 represses cell separation genes during hyphal growth. Also partially controls SEP7 phosphorylation status and subsequent septin ring dynamics. Required for virulence and especially mediates dynamic adhesion to endothelium of blood vessels during circulation. This is Hypha-specific G1 cyclin-related protein 1 (HGC1) from Candida albicans (strain SC5314 / ATCC MYA-2876) (Yeast).